The sequence spans 504 residues: Cytochrome P450 4A2 (504 aa).

The propeptide occupies 1–4; it reads MGFS. Residue Glu315 coordinates heme. Ser434 carries the phosphoserine modification. Cys451 lines the heme pocket.

Belongs to the cytochrome P450 family. The cofactor is heme.

Its subcellular location is the endoplasmic reticulum membrane. It is found in the microsome membrane. It carries out the reaction an omega-methyl-long-chain fatty acid + reduced [NADPH--hemoprotein reductase] + O2 = an omega-hydroxy-long-chain fatty acid + oxidized [NADPH--hemoprotein reductase] + H2O + H(+). The enzyme catalyses dodecanoate + reduced [NADPH--hemoprotein reductase] + O2 = (11R)-hydroxydodecanoate + oxidized [NADPH--hemoprotein reductase] + H2O + H(+). It catalyses the reaction dodecanoate + reduced [NADPH--hemoprotein reductase] + O2 = 12-hydroxydodecanoate + oxidized [NADPH--hemoprotein reductase] + H2O + H(+). The catalysed reaction is tetradecanoate + reduced [NADPH--hemoprotein reductase] + O2 = 14-hydroxytetradecanoate + oxidized [NADPH--hemoprotein reductase] + H2O + H(+). It carries out the reaction hexadecanoate + reduced [NADPH--hemoprotein reductase] + O2 = 16-hydroxyhexadecanoate + oxidized [NADPH--hemoprotein reductase] + H2O + H(+). The protein operates within lipid metabolism; fatty acid metabolism. Its function is as follows. A cytochrome P450 monooxygenase that catalyzes omega and omega-1 hydroxylation of saturated fatty acids. Exhibits preferential omega versus omega-1 regioselectivity and (R) versus (S) stereoselectivity for hydroxylation of lauric and myristic acids. Has low activity toward palmitic acid. Mechanistically, uses molecular oxygen inserting one oxygen atom into a substrate, and reducing the second into a water molecule, with two electrons provided by NADPH via cytochrome P450 reductase (CPR; NADPH-ferrihemoprotein reductase). The polypeptide is Cytochrome P450 4A2 (Rattus norvegicus (Rat)).